Reading from the N-terminus, the 288-residue chain is Light-independent protochlorophyllide reductase iron-sulfur ATP-binding protein (288 aa).

ATP-binding positions include 10–15 and K39; that span reads GIGKST. Mg(2+) is bound at residue S14. C95 and C129 together coordinate [4Fe-4S] cluster. Residues 180-181 and 204-206 each bind ATP; these read NR and PLL.

This sequence belongs to the NifH/BchL/ChlL family. As to quaternary structure, homodimer. Protochlorophyllide reductase is composed of three subunits; ChlL, ChlN and ChlB. [4Fe-4S] cluster is required as a cofactor.

The protein localises to the plastid. The protein resides in the chloroplast. It carries out the reaction chlorophyllide a + oxidized 2[4Fe-4S]-[ferredoxin] + 2 ADP + 2 phosphate = protochlorophyllide a + reduced 2[4Fe-4S]-[ferredoxin] + 2 ATP + 2 H2O. The protein operates within porphyrin-containing compound metabolism; chlorophyll biosynthesis (light-independent). Functionally, component of the dark-operative protochlorophyllide reductase (DPOR) that uses Mg-ATP and reduced ferredoxin to reduce ring D of protochlorophyllide (Pchlide) to form chlorophyllide a (Chlide). This reaction is light-independent. The L component serves as a unique electron donor to the NB-component of the complex, and binds Mg-ATP. The sequence is that of Light-independent protochlorophyllide reductase iron-sulfur ATP-binding protein from Stigeoclonium helveticum (Green alga).